The chain runs to 271 residues: Protein-L-isoaspartate O-methyltransferase (271 aa).

Residues 1–15 (MRKPVTPPGNPPRPR) show a composition bias toward pro residues. The disordered stretch occupies residues 1–60 (MRKPVTPPGNPPRPRSPGYGSTSLAPGITAANSNTRISPPTLARPAPAAGAGGQGGNLGL). Positions 39–49 (PPTLARPAPAA) are enriched in low complexity. Ser119 is an active-site residue.

It belongs to the methyltransferase superfamily. L-isoaspartyl/D-aspartyl protein methyltransferase family.

The protein localises to the cytoplasm. It carries out the reaction [protein]-L-isoaspartate + S-adenosyl-L-methionine = [protein]-L-isoaspartate alpha-methyl ester + S-adenosyl-L-homocysteine. Catalyzes the methyl esterification of L-isoaspartyl residues in peptides and proteins that result from spontaneous decomposition of normal L-aspartyl and L-asparaginyl residues. It plays a role in the repair and/or degradation of damaged proteins. This Bordetella petrii (strain ATCC BAA-461 / DSM 12804 / CCUG 43448) protein is Protein-L-isoaspartate O-methyltransferase.